The sequence spans 200 residues: Holliday junction resolvase RecU (200 aa).

The interval 1 to 25 is disordered; sequence MTIRYPNGKRYNQASQPHKTPIKKH. The Mg(2+) site is built by Thr-85, Asp-87, Glu-100, and Gln-119.

This sequence belongs to the RecU family. The cofactor is Mg(2+).

It is found in the cytoplasm. It carries out the reaction Endonucleolytic cleavage at a junction such as a reciprocal single-stranded crossover between two homologous DNA duplexes (Holliday junction).. Endonuclease that resolves Holliday junction intermediates in genetic recombination. Cleaves mobile four-strand junctions by introducing symmetrical nicks in paired strands. Promotes annealing of linear ssDNA with homologous dsDNA. Required for DNA repair, homologous recombination and chromosome segregation. This Bacillus thuringiensis (strain Al Hakam) protein is Holliday junction resolvase RecU.